A 708-amino-acid chain; its full sequence is Alpha-galactosidase (708 aa).

D441 (nucleophile) is an active-site residue. The Proton donor role is filled by D505.

It belongs to the glycosyl hydrolase 36 family. As to quaternary structure, homotetramer.

The enzyme catalyses Hydrolysis of terminal, non-reducing alpha-D-galactose residues in alpha-D-galactosides, including galactose oligosaccharides, galactomannans and galactolipids.. The sequence is that of Alpha-galactosidase (rafA) from Escherichia coli.